Here is a 142-residue protein sequence, read N- to C-terminus: MVLSAADKNNVKGIFTKIAGHAEEYGAETLERMFITYPPTKTYFPHFDLSHGSAQIKGHGKKVVAALIEAANHIDDIAGTLSKLSDLHAHKLRVDPVNFKLLGQCFLVVVAIHHPAALTPEVHASLDKFLCAVGTVLTAKYR.

The 141-residue stretch at Val-2–Arg-142 folds into the Globin domain. An O2-binding site is contributed by His-59. A heme b-binding site is contributed by His-88.

Belongs to the globin family. In terms of assembly, heterotetramer of two alpha chains and two beta chains. In terms of tissue distribution, red blood cells.

Its function is as follows. Involved in oxygen transport from the lung to the various peripheral tissues. The chain is Hemoglobin subunit alpha-A (HBAA) from Meleagris gallopavo (Wild turkey).